Reading from the N-terminus, the 713-residue chain is Cyclomaltodextrin glucanotransferase (713 aa).

The signal sequence occupies residues 1–27 (MKRFMKLTAVWTLWLSLTLGLLSPVHA). The segment at 28 to 165 (APDTSVSNKQ…NIKVIIDFAP (138 aa)) is A1. Ca(2+) is bound by residues aspartate 54, asparagine 56, asparagine 59, and asparagine 60. Residues cysteine 70 and cysteine 77 are joined by a disulfide bond. The Ca(2+) site is built by glycine 78 and aspartate 80. 127–128 (YW) lines the substrate pocket. Asparagine 166 lines the Ca(2+) pocket. Residues 166–229 (NHTSPASSDD…NLYDLADLNH (64 aa)) form a b region. Histidine 167 contributes to the substrate binding site. Isoleucine 217 is a binding site for Ca(2+). 220 to 223 (NLYD) provides a ligand contact to substrate. Ca(2+) is bound at residue aspartate 226. The segment at 230–433 (NNSSVDVYLK…LRKSNPAIAY (204 aa)) is A2. Arginine 254 is a binding site for substrate. Aspartate 256 serves as the catalytic Nucleophile. Residue 259–260 (KH) participates in substrate binding. Ca(2+) is bound at residue histidine 260. Residue glutamate 284 is the Proton donor of the active site. The substrate site is built by histidine 354, aspartate 398, and arginine 402. A c region spans residues 434–522 (GSTHERWINN…GTAVWQYTTD (89 aa)). Residues 523–609 (ATTPIIGNVG…SNIYDNFEVL (87 aa)) are d. Positions 526 to 607 (PIIGNVGPMM…AASNIYDNFE (82 aa)) constitute an IPT/TIG domain. A CBM20 domain is found at 608–713 (VLTGDQVTVR…TATVNVNWQP (106 aa)). The tract at residues 610–713 (TGDQVTVRFV…TATVNVNWQP (104 aa)) is e.

The protein belongs to the glycosyl hydrolase 13 family. In terms of assembly, monomer. Ca(2+) serves as cofactor.

It localises to the secreted. The enzyme catalyses Cyclizes part of a (1-&gt;4)-alpha-D-glucan chain by formation of a (1-&gt;4)-alpha-D-glucosidic bond.. This Bacillus sp. (strain 1011) protein is Cyclomaltodextrin glucanotransferase (cgt).